A 1400-amino-acid chain; its full sequence is Bromodomain-containing protein 4 (1400 aa).

The segment at 1–58 (MSTESGPGTRLRNLPVMGDGLETSQMSTTQAQAQPQPANAASTNPPPPETSNPNKPKR) is disordered. The segment covering 23-43 (TSQMSTTQAQAQPQPANAAST) has biased composition (low complexity). A Bromo 1 domain is found at 58-164 (RQTNQLQYLL…KLFLQKINEL (107 aa)). K99 participates in a covalent cross-link: Glycyl lysine isopeptide (Lys-Gly) (interchain with G-Cter in SUMO2). Disordered stretches follow at residues 176 to 353 (AKGR…KISE) and 461 to 616 (EPEE…YEEK). Positions 197-212 (PNTTQASTSPQTQTPQ) are enriched in low complexity. The span at 244–267 (PPQPLQTPSPVPPQPPPPPAPVPQ) shows a compositional bias: pro residues. Positions 321–337 (PRRESSRPVKPPKKDVP) are enriched in basic and acidic residues. A Bromo 2 domain is found at 349-458 (SKISEQLKCC…DVFEMRFAKM (110 aa)). Residue S471 is modified to Phosphoserine. Residues 479–498 (KVVAPPSSSDSSSDSSSDSD) are compositionally biased toward low complexity. A phosphoserine; by CK2 mark is found at S485, S489, and S493. Positions 485–504 (SSSDSSSDSSSDSDSSTDDS) are NPS region. Position 495 is a phosphoserine (S495). S499, S500, and S504 each carry phosphoserine; by CK2. A BID region region spans residues 525–580 (QLAALSQPQQNKPKKKEKDKKEKKKEKHKKKEEVEENKKSKTKELPPKKTKKNNSS). The segment covering 536–554 (KPKKKEKDKKEKKKEKHKK) has biased composition (basic residues). The segment covering 555-571 (KEEVEENKKSKTKELPP) has biased composition (basic and acidic residues). Residue K586 forms a Glycyl lysine isopeptide (Lys-Gly) (interchain with G-Cter in SUMO2) linkage. Residues 601 to 683 (ESEEEDKCKP…SCLRKKRKPQ (83 aa)) form the NET domain. S602 is modified (phosphoserine). Residues 606–616 (DKCKPMSYEEK) show a composition bias toward basic and acidic residues. Glycyl lysine isopeptide (Lys-Gly) (interchain with G-Cter in SUMO2) cross-links involve residues K646 and K695. The segment at 675–1125 (CLRKKRKPQA…GCPPASPAAV (451 aa)) is disordered. The span at 700-713 (SSSESESTSESSSS) shows a compositional bias: low complexity. Over residues 725-745 (KSKKKGHTGRDQKKHHHHHHP) the composition is skewed to basic residues. Pro residues-rich tracts occupy residues 748–787 (QPAP…PPSM), 835–848 (PELP…PEHS), 883–892 (PPKPTRPPAV), and 900–909 (PLLPQPPMAQ). Low complexity predominate over residues 928-938 (MQMQLYLQQLQ). Pro residues-rich tracts occupy residues 955-966 (QPPPPLPPPPHP), 975-1000 (PQPP…PRPV), and 1013-1037 (QPPP…PQPA). The tract at residues 1050–1400 (RHHKSDPYSA…LLSIFEENLF (351 aa)) is C-terminal (CTD) region. K1053 participates in a covalent cross-link: Glycyl lysine isopeptide (Lys-Gly) (interchain with G-Cter in SUMO2). Residues 1075–1084 (QMPQFQSLTH) are compositionally biased toward polar residues. A compositionally biased stretch (low complexity) spans 1085–1095 (QSPPQQNVQPK). K1147 is subject to N6-acetyllysine; alternate. A Glycyl lysine isopeptide (Lys-Gly) (interchain with G-Cter in SUMO1); alternate cross-link involves residue K1147. K1147 is covalently cross-linked (Glycyl lysine isopeptide (Lys-Gly) (interchain with G-Cter in SUMO2); alternate). Phosphoserine occurs at positions 1153 and 1162. A disordered region spans residues 1155–1377 (IIRSEPFSTS…KREQERRRRE (223 aa)). The span at 1211–1232 (PDKDKQKQEPKTPVAPKKDLKI) shows a compositional bias: basic and acidic residues. K1233 is covalently cross-linked (Glycyl lysine isopeptide (Lys-Gly) (interchain with G-Cter in SUMO2)). Phosphoserine occurs at positions 1237 and 1240. A compositionally biased stretch (low complexity) spans 1247–1258 (TTPSSTAKSSSD). A compositionally biased stretch (basic and acidic residues) spans 1259–1320 (SFEHFRRAAR…AHEEARRRQE (62 aa)). Residues 1321–1357 (QQQQQQQQRQEQQQQQQQAAAVAAASAPQAQSSQPQS) are compositionally biased toward low complexity. Over residues 1361 to 1377 (QQRELARKREQERRRRE) the composition is skewed to basic and acidic residues.

It belongs to the BET family. As to quaternary structure, binds acetylated histone H4. Interacts with p53/TP53; the interaction is direct. Interacts (via CTD region) with CDK9 and CCNT1, acting as an associated component of P-TEFb complex. Interacts with RELA (when acetylated at 'Lys-310'). Interacts (via NET domain) with NSD3, CHD4, BICRA and ATAD5. The interaction with BICRA bridges BRD4 to the GBAF complex. Interacts (via NET domain) with JMJD6 (via JmjC and N-terminal domains); the interaction is stronger in presence of ssRNA and recruits JMJD6 on distal enhancers. Interacts with NSD3. Interacts with NIPBL. In terms of processing, phosphorylation by CK2 disrupt the intramolecular binding between the bromo domain 2 and the NPS region and promotes binding between the NPS and the BID regions, leading to activate the protein and promote binding to acetylated histones. In absence of phosphorylation, BRD4 does not localize to p53/TP53 target gene promoters, phosphorylation promoting recruitment to p53/TP53 target promoters.

It localises to the nucleus. The protein resides in the chromosome. In terms of biological role, chromatin reader protein that recognizes and binds acetylated histones and plays a key role in transmission of epigenetic memory across cell divisions and transcription regulation. Remains associated with acetylated chromatin throughout the entire cell cycle and provides epigenetic memory for postmitotic G1 gene transcription by preserving acetylated chromatin status and maintaining high-order chromatin structure. During interphase, plays a key role in regulating the transcription of signal-inducible genes by associating with the P-TEFb complex and recruiting it to promoters. Also recruits P-TEFb complex to distal enhancers, so called anti-pause enhancers in collaboration with JMJD6. BRD4 and JMJD6 are required to form the transcriptionally active P-TEFb complex by displacing negative regulators such as HEXIM1 and 7SKsnRNA complex from P-TEFb, thereby transforming it into an active form that can then phosphorylate the C-terminal domain (CTD) of RNA polymerase II. Regulates differentiation of naive CD4(+) T-cells into T-helper Th17 by promoting recruitment of P-TEFb to promoters. Promotes phosphorylation of 'Ser-2' of the C-terminal domain (CTD) of RNA polymerase II. According to a report, directly acts as an atypical protein kinase and mediates phosphorylation of 'Ser-2' of the C-terminal domain (CTD) of RNA polymerase II; these data however need additional evidences in vivo. In addition to acetylated histones, also recognizes and binds acetylated RELA, leading to further recruitment of the P-TEFb complex and subsequent activation of NF-kappa-B. Also acts as a regulator of p53/TP53-mediated transcription: following phosphorylation by CK2, recruited to p53/TP53 specific target promoters. The sequence is that of Bromodomain-containing protein 4 (Brd4) from Mus musculus (Mouse).